A 577-amino-acid polypeptide reads, in one-letter code: Guanine nucleotide-binding protein-like 3-like protein (577 aa).

A compositionally biased stretch (basic residues) spans Met1–Thr30. The segment at Met1 to His75 is disordered. The required for nucleolar localization stretch occupies residues Lys9 to Lys28. Positions Gly42–His75 are enriched in basic and acidic residues. Residues Asn43–Asn103 are a coiled coil. The CP-type G domain maps to Tyr118–Gly304. GTP is bound by residues Asn166–Asp169, Gly253–Ser260, and Asp297–Gly300.

It belongs to the TRAFAC class YlqF/YawG GTPase family. As to quaternary structure, interacts with MDM2; this interaction, which occurs in the nucleoplasm, stabilizes MDM2. Indirectly interacts with TP53, via MDM2-binding. Interacts with TERF1; this interaction probably occurs in the nucleoplasm and is increased during mitosis, when the nucleolus is disassembled. This binding may promote TERF1 homodimerization. Interacts with TERT.

Its subcellular location is the nucleus. It is found in the nucleolus. Stabilizes TERF1 telomeric association by preventing TERF1 recruitment by PML. Stabilizes TERF1 protein by preventing its ubiquitination and hence proteasomal degradation. Does so by interfering with TERF1-binding to FBXO4 E3 ubiquitin-protein ligase. Required for cell proliferation. By stabilizing TRF1 protein during mitosis, promotes metaphase-to-anaphase transition. Stabilizes MDM2 protein by preventing its ubiquitination, and hence proteasomal degradation. By acting on MDM2, may affect TP53 activity. Required for normal processing of ribosomal pre-rRNA. Binds GTP. In Mus musculus (Mouse), this protein is Guanine nucleotide-binding protein-like 3-like protein (Gnl3l).